The chain runs to 591 residues: Isocitrate dehydrogenase kinase/phosphatase (591 aa).

ATP-binding positions include A322 to L328 and K343. D378 is an active-site residue.

It belongs to the AceK family.

The protein resides in the cytoplasm. The enzyme catalyses L-seryl-[isocitrate dehydrogenase] + ATP = O-phospho-L-seryl-[isocitrate dehydrogenase] + ADP + H(+). Functionally, bifunctional enzyme which can phosphorylate or dephosphorylate isocitrate dehydrogenase (IDH) on a specific serine residue. This is a regulatory mechanism which enables bacteria to bypass the Krebs cycle via the glyoxylate shunt in response to the source of carbon. When bacteria are grown on glucose, IDH is fully active and unphosphorylated, but when grown on acetate or ethanol, the activity of IDH declines drastically concomitant with its phosphorylation. In Aromatoleum aromaticum (strain DSM 19018 / LMG 30748 / EbN1) (Azoarcus sp. (strain EbN1)), this protein is Isocitrate dehydrogenase kinase/phosphatase.